Consider the following 129-residue polypeptide: Small ribosomal subunit protein uS11 (129 aa).

Belongs to the universal ribosomal protein uS11 family. Part of the 30S ribosomal subunit. Interacts with proteins S7 and S18. Binds to IF-3.

Located on the platform of the 30S subunit, it bridges several disparate RNA helices of the 16S rRNA. Forms part of the Shine-Dalgarno cleft in the 70S ribosome. The chain is Small ribosomal subunit protein uS11 from Salmonella typhi.